Reading from the N-terminus, the 201-residue chain is MAIILPELPYAYDALEPQFDAETMTLHHDKHHATYVANTDAALEKHPEIGENLEELLADVPKIPEDIRQALINNGGGHLNHALFWELLSPEKQDVTPDVAQAIDDAFGSFDAFKEQFTAAATGRFGSGWAWLVVNKEGQLEITSTANQDTPISEGKKPILALDVWEHAYYLNYRNVRPNYIKAFFEIINWKKVSALYQAAK.

Mn(2+) is bound by residues His-27, His-81, Asp-163, and His-167.

This sequence belongs to the iron/manganese superoxide dismutase family. As to quaternary structure, homodimer. Mn(2+) serves as cofactor.

It localises to the secreted. It carries out the reaction 2 superoxide + 2 H(+) = H2O2 + O2. Its function is as follows. Destroys superoxide anion radicals which are normally produced within the cells and which are toxic to biological systems. The sequence is that of Superoxide dismutase [Mn] (sodA) from Streptococcus pyogenes.